The sequence spans 419 residues: Tyrosine--tRNA ligase 1 (419 aa).

Tyr35 is an L-tyrosine binding site. Residues 40-49 (PTAGSLHIGH) carry the 'HIGH' region motif. L-tyrosine contacts are provided by Tyr172 and Gln176. The 'KMSKS' region motif lies at 232-236 (KFGKT). Residue Lys235 participates in ATP binding. The region spanning 353-418 (QDLVELLIES…KKHFCLVKRA (66 aa)) is the S4 RNA-binding domain.

This sequence belongs to the class-I aminoacyl-tRNA synthetase family. TyrS type 1 subfamily. As to quaternary structure, homodimer.

The protein resides in the cytoplasm. It catalyses the reaction tRNA(Tyr) + L-tyrosine + ATP = L-tyrosyl-tRNA(Tyr) + AMP + diphosphate + H(+). Functionally, catalyzes the attachment of tyrosine to tRNA(Tyr) in a two-step reaction: tyrosine is first activated by ATP to form Tyr-AMP and then transferred to the acceptor end of tRNA(Tyr). This chain is Tyrosine--tRNA ligase 1, found in Vibrio parahaemolyticus serotype O3:K6 (strain RIMD 2210633).